Here is a 284-residue protein sequence, read N- to C-terminus: Nucleotide-binding protein NGK_0463 (284 aa).

Residue 8–15 (GLSGSGKS) coordinates ATP. GTP is bound at residue 58–61 (DVRS).

Belongs to the RapZ-like family.

Functionally, displays ATPase and GTPase activities. In Neisseria gonorrhoeae (strain NCCP11945), this protein is Nucleotide-binding protein NGK_0463.